A 348-amino-acid chain; its full sequence is Mannonate dehydratase (348 aa).

Belongs to the mannonate dehydratase family. The cofactor is Fe(2+). It depends on Mn(2+) as a cofactor.

It catalyses the reaction D-mannonate = 2-dehydro-3-deoxy-D-gluconate + H2O. Its pathway is carbohydrate metabolism; pentose and glucuronate interconversion. Functionally, catalyzes the dehydration of D-mannonate. The sequence is that of Mannonate dehydratase from Streptococcus agalactiae serotype V (strain ATCC BAA-611 / 2603 V/R).